The following is a 1528-amino-acid chain: MLQKCKLEGIIICNEKRLLGAAKVKSGRTLSGALLGTAILASGAGQKALAEETSTTSTSGGDTAVVGTETGNPATNLPDKQDNPSSQAETSQAQARQKTGAMSVDVSTSELDEAAKSPQEAGVTVSQDATVNKGTVEPSDEANQKEPEIKDDYSKQAADIQKATEDYKASVAANQAETDRINQEIAAKKAQYEQDLAANKAEVERSLMRMRKPRPIYEAKLAQNQKDLAAIQQANSDSQAAYAAAKEAYDKEWARVQAANAAAKKAYEEALAANTAKNDQIKAEIEAIQQRSAKADYEAKLAQYEKDLAAAQAGNAANEADYQAKKAAYEQELARVQAANAAAKQAYEQALAANSAKNAQITAENEAIQQNAQAKADYEAKLAQYQKDLAAAQSGNAANEADYQEKLAAYEKELARVQAANAAAKQAYEQQVQQANAKNAEITEANRAIRERNAKAKTDYELKLSKYQEELAQYKKDLAEYPAKLQAYQDEQAAIKAALAELEKHKNEDGNLSEPSAQSLVYDLEPNAQVALVTDGKLLKASALDEAFSHDEKNYNNHLLQPDNLNVTYLEQADDVASSVELFGNFGDKAGWTTTVSNGAEVKFASVLLKRGQSATATYTNLKNSYYNGKKISKVVYKYTVDPDSKFQNPTGNVWLGIFTDPTLGVFASAYTGQNEKDTSIFIKNEFTFYDEDGNPIDFDNALLSVASLNREHNSIEMAKDYSGTFVKISGSSIGEKNGMIYATDTLNFKKGEGGSLHTMYTRASEPGSGWDSADAPNSWYGAGAVRMSGPNNYITLGATSATNVLSLAEMPQVPGKDNTAGKKPNIWYSLNGKIRAVNVPKVTKEKPTPPVEPTKPDEPTYEVEKELVDLPVEPKYEPEPTPPSKNPDQSIPEKPVEPTYEVEKELEPAPVEPSYEKEPTPPQSTPDQEEPEKPVEPSYQSLPTPPVEPVYETVPGPVSVPTVRYHYYKLAVQPGVTKEIKNQDDLDIDKTLVAKQSTVKFQLKTADLPAGRPETTSFVLMDPLPSGYQLNLEATKVASPGFEASYDAMTHTVTFTATAETLAALNQDLTKAVATIYPTVVGQVLNDGATYTNNFTLMVNDAYGIKSNIVRVTTPGKPNDPDNPSNNYITPHKVNKNENGVVIDGKSVLAGTTNYYELTWDLDQYKGDKSAKEIIQKGFFYVDDYPEEALDLRTDLIKLTDANGKAVTGVSVADYASLEAAPAAVQDMLKKANIIPKGAFQVFTADDPQAFYDAYVVTGTDLTIVTPMTVKAEMGKTGGSYENRAYQIDFGNGYESNLVVNNVPKINPEKDVTLTMDPADSTNVDGQTIALNQVFNYRLIGGIIPADHAEELFEYSFSDDYDQTGDQYTGQYKAFAKVDLTLKDGTIIKAGTDLTSYTEAQVDEANGQIVVTFKEDFLRSVSVDSAFQAEVYLQMKRIAVGTFANTYVNTVNGITYSSNTVRTSTPEPKQPSPVDPKTTTTVVFQPRQGKAYQPAPPAGAQLPATGDSSNAYLPLLGLVSLTAGFSC.

Residues Met1–Ala50 form the signal peptide. A disordered region spans residues Ala50–Gln156. Low complexity predominate over residues Glu51 to Thr68. 2 stretches are compositionally biased toward polar residues: residues Asn83–Gln97 and Thr124–Lys133. The span at Ala142 to Ser154 shows a compositional bias: basic and acidic residues. Ag I/II A repeat units follow at residues Gln161 to Asn235, Ser236 to Asn315, Ala316 to Asn396, and Ala397 to Leu478. Disordered stretches follow at residues Val840 to Val951 and Ser1459 to Thr1480. The segment covering Thr855–Pro879 has biased composition (basic and acidic residues). Positions Ser1459 to Glu1468 are enriched in polar residues. Residues Leu1503–Gly1507 carry the LPXTG sorting signal motif. Thr1506 carries the post-translational modification Pentaglycyl murein peptidoglycan amidated threonine. Residues Gly1507 to Cys1528 constitute a propeptide, removed by sortase.

The protein belongs to the antigen I/II family.

It localises to the secreted. Its subcellular location is the cell wall. The polypeptide is Cell surface antigen I/II (Streptococcus downei (Streptococcus sobrinus)).